Consider the following 310-residue polypeptide: Probable deoxyhypusine synthase (310 aa).

The active-site Nucleophile is K284.

This sequence belongs to the deoxyhypusine synthase family. NAD(+) serves as cofactor.

It catalyses the reaction [eIF5A protein]-L-lysine + spermidine = [eIF5A protein]-deoxyhypusine + propane-1,3-diamine. It participates in protein modification; eIF5A hypusination. Its function is as follows. Catalyzes the NAD-dependent oxidative cleavage of spermidine and the subsequent transfer of the butylamine moiety of spermidine to the epsilon-amino group of a specific lysine residue of the eIF-5A precursor protein to form the intermediate deoxyhypusine residue. This chain is Probable deoxyhypusine synthase (dys), found in Thermoplasma acidophilum (strain ATCC 25905 / DSM 1728 / JCM 9062 / NBRC 15155 / AMRC-C165).